Reading from the N-terminus, the 247-residue chain is Ribosomal RNA large subunit methyltransferase E (247 aa).

Positions 99, 101, 123, 139, and 162 each coordinate S-adenosyl-L-methionine. K202 (proton acceptor) is an active-site residue.

The protein belongs to the class I-like SAM-binding methyltransferase superfamily. RNA methyltransferase RlmE family.

The protein localises to the cytoplasm. The catalysed reaction is uridine(2552) in 23S rRNA + S-adenosyl-L-methionine = 2'-O-methyluridine(2552) in 23S rRNA + S-adenosyl-L-homocysteine + H(+). Specifically methylates the uridine in position 2552 of 23S rRNA at the 2'-O position of the ribose in the fully assembled 50S ribosomal subunit. The protein is Ribosomal RNA large subunit methyltransferase E of Anaplasma phagocytophilum (strain HZ).